A 609-amino-acid polypeptide reads, in one-letter code: Glutamine--fructose-6-phosphate aminotransferase [isomerizing] (609 aa).

Cysteine 2 functions as the Nucleophile; for GATase activity in the catalytic mechanism. One can recognise a Glutamine amidotransferase type-2 domain in the interval 2 to 218 (CGIVGAIAQR…EGDIAEITRR (217 aa)). 2 SIS domains span residues 286 to 426 (ADEL…LKGL) and 458 to 599 (LAED…VDQP). Lysine 604 functions as the For Fru-6P isomerization activity in the catalytic mechanism.

Homodimer.

Its subcellular location is the cytoplasm. It carries out the reaction D-fructose 6-phosphate + L-glutamine = D-glucosamine 6-phosphate + L-glutamate. Its function is as follows. Catalyzes the first step in hexosamine metabolism, converting fructose-6P into glucosamine-6P using glutamine as a nitrogen source. This Escherichia coli O6:H1 (strain CFT073 / ATCC 700928 / UPEC) protein is Glutamine--fructose-6-phosphate aminotransferase [isomerizing].